A 100-amino-acid polypeptide reads, in one-letter code: Small ribosomal subunit protein uS14c (100 aa).

It belongs to the universal ribosomal protein uS14 family. As to quaternary structure, part of the 30S ribosomal subunit.

Its subcellular location is the plastid. It localises to the chloroplast. Binds 16S rRNA, required for the assembly of 30S particles. The sequence is that of Small ribosomal subunit protein uS14c from Oenothera argillicola (Appalachian evening primrose).